The chain runs to 234 residues: Myelin protein zero-like protein 3 (234 aa).

An N-terminal signal peptide occupies residues 1–31 (MQQSGVPGSRGCALCPLLGVLFFQGVYVIFS). The region spanning 32 to 148 (LEIKADAHVR…NIPATELTVT (117 aa)) is the Ig-like V-type domain. The Extracellular segment spans residues 32 to 158 (LEIKADAHVR…ERGFGTMLSS (127 aa)). Residues C52 and C128 are joined by a disulfide bond. N123 carries N-linked (GlcNAc...) asparagine glycosylation. A helical transmembrane segment spans residues 159–179 (VALLSILVFIPSTVVVILLLV). Topologically, residues 180–234 (RMGRKSAGLKKRSKSGYKKSSIEVSDDTDQEGDDCMAKLCVRCAECVDSDYEETY) are cytoplasmic.

The protein belongs to the myelin P0 protein family.

It is found in the membrane. Its function is as follows. Mediates homophilic cell-cell adhesion. The sequence is that of Myelin protein zero-like protein 3 (MPZL3) from Bos taurus (Bovine).